Reading from the N-terminus, the 452-residue chain is MPEFLEDPSVLTKDKLKSELVANNVTLPAGEQRKDVYVQLYLQHLTARNRPPLAAGANSKGPPDFSSDEEREPTPVLGSGASVGRGRGAVGRKATKKTDKPRLEDKDDLDVTELSNEELLDQLVRYGVNPGPIVGTTRKLYEKKLLKLREQGTESRSSTPLPTVSSSAENTRQNGSNDSDRYSDNDEDSKIELKLEKREPLKGRAKTPVTLKQRRTEHNQSYSQAGVTETEWTSGSSTGGPLQALTRESTRGSRRTPRKRVETSQHFRIDGAVISESTPIAETIKASSNESLVANRLTGNFKHASSILPITEFSDITRRTPKKPLTRAEVGEKTEERRVDRDILKEMFPYEASTPTGISASCRRPIKGAAGRPLELSDFRMEESFSSKYVPKYAPLADVKSEKTKKRRSVPMWIKMLLFALVAVFLFLVYQAMETNQGNPFTNFLQDTKISN.

Positions 1 to 409 (MPEFLEDPSV…KSEKTKKRRS (409 aa)) are nucleoplasmic. Positions 5 to 48 (LEDPSVLTKDKLKSELVANNVTLPAGEQRKDVYVQLYLQHLTAR) constitute an LEM-like domain. Disordered stretches follow at residues 48 to 111 (RNRP…DLDV) and 149 to 263 (REQG…RVET). The linker stretch occupies residues 49-108 (NRPPLAAGANSKGPPDFSSDEEREPTPVLGSGASVGRGRGAVGRKATKKTDKPRLEDKDD). 3 positions are modified to phosphoserine: serine 59, serine 66, and serine 67. Phosphothreonine is present on threonine 74. 2 positions are modified to phosphoserine: serine 79 and serine 82. An omega-N-methylarginine mark is found at arginine 85 and arginine 87. Residues 96–105 (KKTDKPRLED) are compositionally biased toward basic and acidic residues. The 45-residue stretch at 109–153 (LDVTELSNEELLDQLVRYGVNPGPIVGTTRKLYEKKLLKLREQGT) folds into the LEM domain. Residues 137-242 (TRKLYEKKLL…TSGSSTGGPL (106 aa)) form an NAKAP95-binding N region. Threonine 153 carries the post-translational modification Phosphothreonine. Over residues 154–177 (ESRSSTPLPTVSSSAENTRQNGSN) the composition is skewed to polar residues. Phosphoserine is present on residues serine 155 and serine 158. Phosphothreonine is present on residues threonine 159 and threonine 163. Phosphoserine occurs at positions 165, 167, and 176. Residues 178-202 (DSDRYSDNDEDSKIELKLEKREPLK) show a composition bias toward basic and acidic residues. Serine 179 bears the Phosphoserine; by PKC mark. Residues serine 183 and serine 189 each carry the phosphoserine modification. Lysine 206 carries the post-translational modification N6-acetyllysine. A Phosphothreonine modification is found at threonine 210. Residues serine 221 and serine 223 each carry the phosphoserine modification. Residues 226–240 (GVTETEWTSGSSTGG) are compositionally biased toward low complexity. Phosphoserine occurs at positions 249, 253, 264, 291, 305, and 306. The segment at 298–370 (TGNFKHASSI…SCRRPIKGAA (73 aa)) is binds lamins B. Residues 299 to 373 (GNFKHASSIL…RPIKGAAGRP (75 aa)) form an NAKAP95-binding C region. The residue at position 311 (threonine 311) is a Phosphothreonine. Position 314 is a phosphoserine (serine 314). Arginine 319 is modified (citrulline). A phosphoserine mark is found at serine 361, serine 377, and serine 384. Position 388 is an N6-acetyllysine (lysine 388). Lysine 400 participates in a covalent cross-link: Glycyl lysine isopeptide (Lys-Gly) (interchain with G-Cter in SUMO2). Serine 401 is modified (phosphoserine). Residues 410 to 430 (VPMWIKMLLFALVAVFLFLVY) traverse the membrane as a helical; Signal-anchor for type II membrane protein segment. The Lumenal portion of the chain corresponds to 431–452 (QAMETNQGNPFTNFLQDTKISN).

This sequence belongs to the LEM family. As to quaternary structure, interacts with LMNB1, LMNB2, BANF1, AKAP8L, GMCL and chromosomes. In terms of processing, mitosis-specific phosphorylation specifically abolishes its binding to lamin B and chromosomes. Post-translationally, citrullinated by PADI4.

The protein localises to the nucleus inner membrane. It localises to the chromosome. Functionally, may help direct the assembly of the nuclear lamina and thereby help maintain the structural organization of the nuclear envelope. Possible receptor for attachment of lamin filaments to the inner nuclear membrane. May be involved in the control of initiation of DNA replication through its interaction with NAKAP95. The polypeptide is Lamina-associated polypeptide 2, isoforms beta/delta/epsilon/gamma (Tmpo) (Mus musculus (Mouse)).